A 95-amino-acid chain; its full sequence is GIPCGESCVFIPCITGAIGCSCKSKVCYRNHVIAAEAKTMDDHHLLCQSHEDCITKGTGNFCAPFPDQDIKYGWCFRAESEGFMLKDHLKMSITN.

Residues 1–30 (GIPCGESCVFIPCITGAIGCSCKSKVCYRN) constitute a cross-link (cyclopeptide (Gly-Asn)). 3 disulfides stabilise this stretch: cysteine 4–cysteine 20, cysteine 8–cysteine 22, and cysteine 13–cysteine 27. Positions 31–95 (HVIAAEAKTM…KDHLKMSITN (65 aa)) are cleaved as a propeptide — removed in mature form.

Post-translationally, contains 3 disulfide bonds. This is a cyclic peptide. As to expression, expressed in flower, stem, shoot, root, leaf, seed, pod and nodule (at protein level).

Functionally, probably participates in a plant defense mechanism. Active against Gram-negative bacteria E.coli ATCC 700926 (MIC=1.1 uM), K.pneumoniae ATTC 13883 (MIC=2.7 uM) and P.aeruginosa ATCC 39018 (MIC=4.7 uM). Has hemolytic and cytotoxic activity. The sequence is that of Cliotide T1 from Clitoria ternatea (Butterfly pea).